A 60-amino-acid chain; its full sequence is Prophage outer membrane lipoprotein RzoD (60 aa).

Positions 1-19 (MRKLKMMLCVMMLPLVVVG) are cleaved as a signal peptide. A lipid anchor (N-palmitoyl cysteine) is attached at cysteine 20. The S-diacylglycerol cysteine moiety is linked to residue cysteine 20.

It belongs to the lambdalikevirus o-spanin family. In terms of assembly, homodimer; disulfide-linked. Interacts (via C-terminus) with RZ (via C-terminus). Part of the spanin complex which spans the entire periplasmic space. The spanin complex is composed of spanin, inner membrane subunit and spanin, outer membrane subunit.

Its subcellular location is the cell outer membrane. Component of the spanin complex that disrupts the outer membrane and causes cell lysis during virus exit. The spanin complex conducts the final step in cell lysis by disrupting the outer membrane after holin and endolysin action have permeabilized the inner membrane and degraded the host peptidoglycans. The sequence is that of Prophage outer membrane lipoprotein RzoD (rzoD) from Escherichia coli (strain K12).